The primary structure comprises 154 residues: MVNTGEIKNLEAIDIVKLLSVLPHRYPFLLIDRIIEIDGDRKAIGIKNVTVNEPHFVGHFPENPVMPGVLILEAMAQTAGAISLLALGRGKEDLVYLMTIDNAKFRKPVVPGDQMRIHVQLLKKRSEVRRFLCIAEVEGTRVSEAEISAMVVKS.

The active site involves His59.

This sequence belongs to the thioester dehydratase family. FabZ subfamily.

The protein resides in the cytoplasm. It carries out the reaction a (3R)-hydroxyacyl-[ACP] = a (2E)-enoyl-[ACP] + H2O. Involved in unsaturated fatty acids biosynthesis. Catalyzes the dehydration of short chain beta-hydroxyacyl-ACPs and long chain saturated and unsaturated beta-hydroxyacyl-ACPs. In Bartonella bacilliformis (strain ATCC 35685 / KC583 / Herrer 020/F12,63), this protein is 3-hydroxyacyl-[acyl-carrier-protein] dehydratase FabZ.